A 117-amino-acid chain; its full sequence is Large ribosomal subunit protein bL20 (117 aa).

Belongs to the bacterial ribosomal protein bL20 family.

Binds directly to 23S ribosomal RNA and is necessary for the in vitro assembly process of the 50S ribosomal subunit. It is not involved in the protein synthesizing functions of that subunit. The polypeptide is Large ribosomal subunit protein bL20 (Roseiflexus castenholzii (strain DSM 13941 / HLO8)).